The following is a 460-amino-acid chain: Phosphomethylpyrimidine synthase (460 aa).

Substrate-binding positions include asparagine 80, methionine 109, tyrosine 138, histidine 174, 194–196, 235–238, and glutamate 274; these read SRG and DSLR. Position 278 (histidine 278) interacts with Zn(2+). Tyrosine 301 contacts substrate. Histidine 342 contributes to the Zn(2+) binding site. [4Fe-4S] cluster is bound by residues cysteine 422, cysteine 425, and cysteine 430.

It belongs to the ThiC family. In terms of assembly, homodimer. [4Fe-4S] cluster is required as a cofactor.

The catalysed reaction is 5-amino-1-(5-phospho-beta-D-ribosyl)imidazole + S-adenosyl-L-methionine = 4-amino-2-methyl-5-(phosphooxymethyl)pyrimidine + CO + 5'-deoxyadenosine + formate + L-methionine + 3 H(+). The protein operates within cofactor biosynthesis; thiamine diphosphate biosynthesis. Catalyzes the synthesis of the hydroxymethylpyrimidine phosphate (HMP-P) moiety of thiamine from aminoimidazole ribotide (AIR) in a radical S-adenosyl-L-methionine (SAM)-dependent reaction. In Sulfurimonas denitrificans (strain ATCC 33889 / DSM 1251) (Thiomicrospira denitrificans (strain ATCC 33889 / DSM 1251)), this protein is Phosphomethylpyrimidine synthase.